The sequence spans 325 residues: Diacylglycerol acyltransferase/mycolyltransferase Ag85B (325 aa).

An N-terminal signal peptide occupies residues 1–40; the sequence is MTDVSRKIRAWGRRLMIGTAAAVVLPGLVGLAGGAATAGA. Substrate is bound at residue 82–83; that stretch reads LR. Residues 98–108 are fibronectin-binding; the sequence is FEWYYQSGLSI. Cysteines 127 and 132 form a disulfide. Residues S166 and D194 each coordinate substrate. The active-site Nucleophile is S166. E270 is a catalytic residue. Substrate-binding positions include 272–275, K279, and 302–304; these read FVRS and HSW. H302 is an active-site residue.

Belongs to the mycobacterial A85 antigen family.

It is found in the secreted. It carries out the reaction 2 alpha,alpha'-trehalose 6-mycolate = alpha,alpha'-trehalose 6,6'-bismycolate + alpha,alpha-trehalose. It catalyses the reaction an acyl-CoA + a 1,2-diacyl-sn-glycerol = a triacyl-sn-glycerol + CoA. Functionally, the antigen 85 proteins (FbpA, FbpB, FbpC) are responsible for the high affinity of mycobacteria for fibronectin, a large adhesive glycoprotein, which facilitates the attachment of M.tuberculosis to murine alveolar macrophages (AMs). They also help to maintain the integrity of the cell wall by catalyzing the transfer of mycolic acids to cell wall arabinogalactan and through the synthesis of alpha,alpha-trehalose dimycolate (TDM, cord factor). They catalyze the transfer of a mycoloyl residue from one molecule of alpha,alpha-trehalose monomycolate (TMM) to another TMM, leading to the formation of TDM. This is Diacylglycerol acyltransferase/mycolyltransferase Ag85B (fbpB) from Mycobacterium tuberculosis (strain ATCC 25177 / H37Ra).